A 105-amino-acid polypeptide reads, in one-letter code: uncharacterized protein (105 aa).

This is an uncharacterized protein from Mycobacterium bovis (strain ATCC BAA-935 / AF2122/97).